A 170-amino-acid chain; its full sequence is Translationally-controlled tumor protein homolog (170 aa).

The TCTP domain occupies 1–170; the sequence is MLIYSDIITG…WKHGLKETKV (170 aa).

Belongs to the TCTP family.

Its subcellular location is the cytoplasm. The protein localises to the cytoskeleton. Involved in protein synthesis. Involved in microtubule stabilization. In Neurospora crassa (strain ATCC 24698 / 74-OR23-1A / CBS 708.71 / DSM 1257 / FGSC 987), this protein is Translationally-controlled tumor protein homolog.